We begin with the raw amino-acid sequence, 285 residues long: Protein HtrL (285 aa).

The polypeptide is Protein HtrL (Escherichia coli (strain K12)).